Reading from the N-terminus, the 466-residue chain is MPHSYDYDAIVIGSGPGGEGAAMGLVKQGARVAVIERYQNVGGGCTHWGTIPSKALRHAVSRIIEFNQNPLYSDHSRLLRSSFADILNHADNVINQQTRMRQGFYERNHCEILQGNARFVDEHTLALDCPDGSVETLTAEKFVIACGSRPYHPTDVDFPHPRIYDSDSILSMHHEPRHVLIYGAGVIGCEYASIFRGMDVKVDLINTRDRLLAFLDQEMSDSLSYHFWNSGVVIRHNEEYEKIEGCDDGVIMHLKSGKKLKADCLLYANGRTGNTDSLALQNIGLETDSRGQLKVNSMYQTAQPHVYAVGDVIGYPSLASAAYDQGRIAAQALVKGEATAHLIEDIPTGIYTIPEISSVGKTEQQLTAMKVPYEVGRAQFKHLARAQIVGMNVGTLKILFHRETKEILGIHCFGERAAEIIHIGQAIMEQKGGGNTIEYFVNTTFNYPTMAEAYRVAALNGLNRLF.

Residue glutamate 36–cysteine 45 coordinates FAD.

This sequence belongs to the class-I pyridine nucleotide-disulfide oxidoreductase family. It depends on FAD as a cofactor.

The protein resides in the cytoplasm. It carries out the reaction NAD(+) + NADPH = NADH + NADP(+). In terms of biological role, conversion of NADPH, generated by peripheral catabolic pathways, to NADH, which can enter the respiratory chain for energy generation. This Escherichia coli O127:H6 (strain E2348/69 / EPEC) protein is Soluble pyridine nucleotide transhydrogenase.